A 1435-amino-acid chain; its full sequence is Cardiac-enriched FHL2-interacting protein (1435 aa).

Disordered regions lie at residues 109–176 (EEKY…PPKF), 203–234 (SNTHQNSYQPGRKHGEQESSKNPEMACHGSSS), 250–270 (FPSPHHKPVTGEPGRGKGTFL), and 291–311 (KDTAGTVPESKAPKHYGDTTL). T120 carries the post-translational modification Phosphothreonine. Positions 133 to 147 (LRSSNKPVSKVSTLI) are enriched in polar residues. The span at 149 to 160 (SFDRTESQRCES) shows a compositional bias: basic and acidic residues. S323 is subject to Phosphoserine. Disordered stretches follow at residues 362–592 (EGKA…LTLS), 609–772 (AERS…EKEN), 795–847 (SQGE…SPSS), 1007–1108 (PEGD…ARVT), 1138–1261 (SPRG…PGGP), and 1363–1435 (QGPR…EGIS). The segment covering 389-402 (KGKESLQDTLEEKT) has biased composition (basic and acidic residues). S470 bears the Phosphoserine mark. Composition is skewed to basic and acidic residues over residues 479–493 (QEKEPSECQSRDSYK), 522–535 (VLDEKTRGKVDGKQ), 609–620 (AERSSYENKEVE), and 650–667 (CNRDPEPGGATEKMKTHQ). Polar residues predominate over residues 668–679 (LENGLSRSVSQE). Over residues 727–741 (KFSTSSSDQSFASFD) the composition is skewed to low complexity. The segment covering 751–772 (NQREDRRKDVSAGDSQKDEKEN) has biased composition (basic and acidic residues). Position 816 is a phosphoserine (S816). Polar residues predominate over residues 831 to 847 (KGTTFSQAKDLTPSPSS). The segment covering 1055-1066 (NSPNPGSPGESS) has biased composition (low complexity). The segment covering 1067–1082 (ACSPAASNIWEESSQA) has biased composition (polar residues). A compositionally biased stretch (low complexity) spans 1083–1093 (PGGPELLPEEP). Residues 1094-1105 (NQASPWASSSPA) are compositionally biased toward polar residues. Basic residues predominate over residues 1182 to 1193 (RRAKKLASKRRK). Over residues 1194–1211 (TDQAQEKHGESQEGKPCP) the composition is skewed to basic and acidic residues. The span at 1424-1435 (DDLEDFATEGIS) shows a compositional bias: acidic residues.

Interacts with FHL2. Expressed in the heart and skeletal muscle.

It is found in the cytoplasm. The protein resides in the myofibril. Its subcellular location is the sarcomere. The protein localises to the z line. Functionally, plays an important role in cardiomyocyte hypertrophy via activation of the calcineurin/NFAT signaling pathway. The protein is Cardiac-enriched FHL2-interacting protein of Homo sapiens (Human).